We begin with the raw amino-acid sequence, 427 residues long: Serine--tRNA ligase (427 aa).

Residue 231-233 (TAE) coordinates L-serine. Position 262–264 (262–264 (RSE)) interacts with ATP. Glutamate 285 provides a ligand contact to L-serine. 349 to 352 (EISS) contacts ATP. Position 385 (serine 385) interacts with L-serine.

This sequence belongs to the class-II aminoacyl-tRNA synthetase family. Type-1 seryl-tRNA synthetase subfamily. Homodimer. The tRNA molecule binds across the dimer.

The protein resides in the cytoplasm. The catalysed reaction is tRNA(Ser) + L-serine + ATP = L-seryl-tRNA(Ser) + AMP + diphosphate + H(+). It carries out the reaction tRNA(Sec) + L-serine + ATP = L-seryl-tRNA(Sec) + AMP + diphosphate + H(+). It participates in aminoacyl-tRNA biosynthesis; selenocysteinyl-tRNA(Sec) biosynthesis; L-seryl-tRNA(Sec) from L-serine and tRNA(Sec): step 1/1. Its function is as follows. Catalyzes the attachment of serine to tRNA(Ser). Is also able to aminoacylate tRNA(Sec) with serine, to form the misacylated tRNA L-seryl-tRNA(Sec), which will be further converted into selenocysteinyl-tRNA(Sec). This Sinorhizobium medicae (strain WSM419) (Ensifer medicae) protein is Serine--tRNA ligase.